Consider the following 804-residue polypeptide: Zinc finger protein 541 (804 aa).

Disordered stretches follow at residues 21 to 120 (SKAS…NPDI) and 133 to 197 (TLDL…GNPR). A C2H2-type 1 zinc finger spans residues 285 to 307 (FICKNCSQMFYTEKGLSSHMCFH). A disordered region spans residues 379–426 (MEQEKDGEERDSKESSQQRKRKKRPPPKRLFIPPPPSTAGEPGPAGCH). Basic and acidic residues predominate over residues 380-395 (EQEKDGEERDSKESSQ). Residues 396 to 405 (QRKRKKRPPP) are compositionally biased toward basic residues. Residues 509 to 601 (PHINIGSRFQ…VALETLLLRG (93 aa)) form the ELM2 domain. One can recognise an SANT domain in the interval 616–667 (TGSDVWTPIEKRLFKKAFYAHKKDFYLIHKTIQTKTVAQCVEYYYIWKKMIK). A disordered region spans residues 680 to 743 (VKREPEEVER…TPEPSGSVES (64 aa)). Over residues 690 to 721 (TEEKVPCSPRERPSHHPIPELKIKTKSYRRES) the composition is skewed to basic and acidic residues. The C2H2-type 2 zinc finger occupies 747–769 (FPCRECERVFDKIKSRNAHMKRH).

In terms of assembly, interacts with DNTTIP1. Identified in a complex with KCDT19, HDAC1 and HSPA2s. Component of a histone deacetylase complex containing DNTTIP1, ZNF541, HDAC1 and HDAC2. Identified in a complex with HDAC1, HDAC2, DNTTIP1 and KCTD19.

The protein resides in the nucleus. In terms of biological role, transcription regulator which is essential for male fertility and for the completion of meiotic prophase in spermatocytes. Regulates progression of the pachytene stage of meiotic prophase by activating the expression of genes involved in meiosis and post-meiosis during spermatogenesis. Maintains the repression of pre-pachytene transcriptional programs, including meiotic double-strand breaks (DSB) formation genes in pachytene spermatocytes and suppresses aberrant DSB formation after mid-pachytene, thus ensuring meiosis progression. The sequence is that of Zinc finger protein 541 (ZNF541) from Macaca fascicularis (Crab-eating macaque).